Here is a 353-residue protein sequence, read N- to C-terminus: Photosystem II protein D1 (353 aa).

Threonine 2 is subject to N-acetylthreonine. Position 2 is a phosphothreonine (threonine 2). A run of 3 helical transmembrane segments spans residues 29–46 (YIGW…TATS), 118–133 (HFLL…EWEL), and 142–156 (WIAV…AAAA). Histidine 118 provides a ligand contact to chlorophyll a. Position 126 (tyrosine 126) interacts with pheophytin a. [CaMn4O5] cluster is bound by residues aspartate 170 and glutamate 189. Residues 197–218 (FHMLGVAGVFGGSLFSAMHGSL) traverse the membrane as a helical segment. Residue histidine 198 coordinates chlorophyll a. A quinone is bound by residues histidine 215 and 264–265 (SF). Histidine 215 contacts Fe cation. Histidine 272 is a binding site for Fe cation. Residues 274 to 288 (FLAAWPVVGIWFTAL) form a helical membrane-spanning segment. [CaMn4O5] cluster-binding residues include histidine 332, glutamate 333, aspartate 342, and alanine 344. The propeptide occupies 345 to 353 (AVEAPSING).

This sequence belongs to the reaction center PufL/M/PsbA/D family. In terms of assembly, PSII is composed of 1 copy each of membrane proteins PsbA, PsbB, PsbC, PsbD, PsbE, PsbF, PsbH, PsbI, PsbJ, PsbK, PsbL, PsbM, PsbT, PsbX, PsbY, PsbZ, Psb30/Ycf12, at least 3 peripheral proteins of the oxygen-evolving complex and a large number of cofactors. It forms dimeric complexes. The D1/D2 heterodimer binds P680, chlorophylls that are the primary electron donor of PSII, and subsequent electron acceptors. It shares a non-heme iron and each subunit binds pheophytin, quinone, additional chlorophylls, carotenoids and lipids. D1 provides most of the ligands for the Mn4-Ca-O5 cluster of the oxygen-evolving complex (OEC). There is also a Cl(-1) ion associated with D1 and D2, which is required for oxygen evolution. The PSII complex binds additional chlorophylls, carotenoids and specific lipids. serves as cofactor. Tyr-161 forms a radical intermediate that is referred to as redox-active TyrZ, YZ or Y-Z. In terms of processing, C-terminally processed by CTPA; processing is essential to allow assembly of the oxygen-evolving complex and thus photosynthetic growth.

It localises to the plastid. The protein localises to the chloroplast thylakoid membrane. It carries out the reaction 2 a plastoquinone + 4 hnu + 2 H2O = 2 a plastoquinol + O2. In terms of biological role, photosystem II (PSII) is a light-driven water:plastoquinone oxidoreductase that uses light energy to abstract electrons from H(2)O, generating O(2) and a proton gradient subsequently used for ATP formation. It consists of a core antenna complex that captures photons, and an electron transfer chain that converts photonic excitation into a charge separation. The D1/D2 (PsbA/PsbD) reaction center heterodimer binds P680, the primary electron donor of PSII as well as several subsequent electron acceptors. In Vitis vinifera (Grape), this protein is Photosystem II protein D1.